The primary structure comprises 310 residues: Dopamine receptor-interacting protein 1 (310 aa).

In terms of assembly, interacts with DRD1.

Could be a regulator of the dopamine receptor signaling pathway. The sequence is that of Dopamine receptor-interacting protein 1 from Homo sapiens (Human).